The following is a 25-amino-acid chain: Ocellatin-L1 (25 aa).

A Leucine amide modification is found at Leu-25.

This sequence belongs to the frog skin active peptide (FSAP) family. Ocellatin subfamily. In terms of tissue distribution, expressed by the skin glands.

It is found in the secreted. Functionally, antimicrobial peptide with activity against Gram-negative bacteria but without activity against Gram-positive bacteria. Shows a low activity in stimulating insulin release from rat BRIN-BD11 beta cells, and acts without loss of integrity of the plasma membrane. Has very low hemolytic activity. Shows weak amphipathicity in its alpha-helical conformation. This is Ocellatin-L1 from Leptodactylus laticeps (Santa Fe frog).